Reading from the N-terminus, the 193-residue chain is Annexin-2 receptor (193 aa).

Positions 78–87 are enriched in polar residues; the sequence is QSTLEPSTAK. The tract at residues 78–111 is disordered; that stretch reads QSTLEPSTAKPTEFSWPGTQKQQEAPVEEVGQAE.

As to expression, widely expressed. Highly expressed in lymphocytes. Expressed in both resting CD4(+) and CD8(+) T-cells.

May act as a receptor for annexin II on marrow stromal cells to induce osteoclast formation. In Homo sapiens (Human), this protein is Annexin-2 receptor (ANXA2R).